Reading from the N-terminus, the 151-residue chain is Small ribosomal subunit protein uS13 (151 aa).

The protein belongs to the universal ribosomal protein uS13 family. In terms of assembly, part of the 30S ribosomal subunit. Forms a loose heterodimer with protein S19. Forms two bridges to the 50S subunit in the 70S ribosome.

Its function is as follows. Located at the top of the head of the 30S subunit, it contacts several helices of the 16S rRNA. In the 70S ribosome it contacts the 23S rRNA (bridge B1a) and protein L5 of the 50S subunit (bridge B1b), connecting the 2 subunits; these bridges are implicated in subunit movement. This Staphylothermus marinus (strain ATCC 43588 / DSM 3639 / JCM 9404 / F1) protein is Small ribosomal subunit protein uS13.